Here is a 906-residue protein sequence, read N- to C-terminus: Catenin alpha-1 (906 aa).

T2 bears the N-acetylthreonine mark. Positions 2-228 (TAVHTGNINF…PILYTASQAC (227 aa)) are involved in homodimerization. K57 participates in a covalent cross-link: Glycyl lysine isopeptide (Lys-Gly) (interchain with G-Cter in SUMO2). An interaction with JUP and CTNNB1 region spans residues 97 to 148 (VRKQCDLMKSAAGEFADDPCSSVKRGNMVRAARALLSAVTRLLILADMADVY). Phosphoserine occurs at positions 264, 268, 295, and 297. The segment at 325–394 (TRDDRRERIV…AVMDHVSDSF (70 aa)) is interaction with alpha-actinin. T634 carries the phosphothreonine modification. Phosphoserine is present on S641. T645 bears the Phosphothreonine mark. S652 and S655 each carry phosphoserine. T658 carries the post-translational modification Phosphothreonine. Residue K797 forms a Glycyl lysine isopeptide (Lys-Gly) (interchain with G-Cter in SUMO2) linkage. S851 carries the post-translational modification Phosphoserine. A compositionally biased stretch (basic and acidic residues) spans 864-880 (PEKKPLVKREKQDETQT). The segment at 864-894 (PEKKPLVKREKQDETQTKIKRASQKKHVNPV) is disordered. The span at 881-891 (KIKRASQKKHV) shows a compositional bias: basic residues.

Belongs to the vinculin/alpha-catenin family. As to quaternary structure, monomer and homodimer; the monomer preferentially binds to CTNNB1 and the homodimer to actin. Component of an cadherin:catenin adhesion complex composed of at least of CDH26, beta-catenin/CTNNB1, alpha-catenin/CTNNA1 and p120 catenin/CTNND1. Possible component of an E-cadherin/ catenin adhesion complex together with E-cadherin/CDH1 and beta-catenin/CTNNB1 or gamma-catenin/JUP; the complex is located to adherens junctions. The stable association of CTNNA1 is controversial as CTNNA1 was shown not to bind to F-actin when assembled in the complex. Alternatively, the CTNNA1-containing complex may be linked to F-actin by other proteins such as LIMA1. Binds AFDN and F-actin. Interacts with ARHGAP21. Interacts with AJUBA. Interacts with LIMA1. Interacts with vinculin/VCL. Interacts with TJP2/ZO2 (via N-terminus). Interacts with TJP1/ZO1 (via N-terminus). In terms of processing, sumoylated. Phosphorylation seems to contribute to the strength of cell-cell adhesion rather than to the basic capacity for cell-cell adhesion.

It localises to the cytoplasm. The protein resides in the cytoskeleton. Its subcellular location is the cell junction. The protein localises to the adherens junction. It is found in the cell membrane. It localises to the nucleus. In terms of biological role, associates with the cytoplasmic domain of a variety of cadherins. The association of catenins to cadherins produces a complex which is linked to the actin filament network, and which seems to be of primary importance for cadherins cell-adhesion properties. Can associate with both E- and N-cadherins. Originally believed to be a stable component of E-cadherin/catenin adhesion complexes and to mediate the linkage of cadherins to the actin cytoskeleton at adherens junctions. In contrast, cortical actin was found to be much more dynamic than E-cadherin/catenin complexes and CTNNA1 was shown not to bind to F-actin when assembled in the complex suggesting a different linkage between actin and adherens junctions components. The homodimeric form may regulate actin filament assembly and inhibit actin branching by competing with the Arp2/3 complex for binding to actin filaments. Involved in the regulation of WWTR1/TAZ, YAP1 and TGFB1-dependent SMAD2 and SMAD3 nuclear accumulation. May play a crucial role in cell differentiation. This Bos taurus (Bovine) protein is Catenin alpha-1.